Here is a 60-residue protein sequence, read N- to C-terminus: DNA gyrase inhibitor YacG (60 aa).

Residues Cys15, Cys18, Cys30, and Cys34 each contribute to the Zn(2+) site.

The protein belongs to the DNA gyrase inhibitor YacG family. In terms of assembly, interacts with GyrB. Requires Zn(2+) as cofactor.

Its function is as follows. Inhibits all the catalytic activities of DNA gyrase by preventing its interaction with DNA. Acts by binding directly to the C-terminal domain of GyrB, which probably disrupts DNA binding by the gyrase. The polypeptide is DNA gyrase inhibitor YacG (Nitrobacter hamburgensis (strain DSM 10229 / NCIMB 13809 / X14)).